We begin with the raw amino-acid sequence, 113 residues long: Large ribosomal subunit protein P1 (113 aa).

The disordered stretch occupies residues 84 to 113 (APAAAAKKETKKEEVKKEESDDDMGMGLFD). Over residues 89–102 (AKKETKKEEVKKEE) the composition is skewed to basic and acidic residues.

This sequence belongs to the eukaryotic ribosomal protein P1/P2 family. As to quaternary structure, P1 and P2 exist as dimers at the large ribosomal subunit.

Plays an important role in the elongation step of protein synthesis. The sequence is that of Large ribosomal subunit protein P1 (rplp1) from Dictyostelium discoideum (Social amoeba).